Consider the following 1099-residue polypeptide: Mediator of RNA polymerase II transcription subunit 5 (1099 aa).

The interval 41–66 (DNDDAKTQEGSGSQDKTDVEESISKP) is disordered.

The protein belongs to the Mediator complex subunit 5 family. In terms of assembly, component of the Mediator complex.

Its subcellular location is the nucleus. Functionally, component of the Mediator complex, a coactivator involved in the regulated transcription of nearly all RNA polymerase II-dependent genes. Mediator functions as a bridge to convey information from gene-specific regulatory proteins to the basal RNA polymerase II transcription machinery. Mediator is recruited to promoters by direct interactions with regulatory proteins and serves as a scaffold for the assembly of a functional preinitiation complex with RNA polymerase II and the general transcription factors. The protein is Mediator of RNA polymerase II transcription subunit 5 (NUT1) of Candida glabrata (strain ATCC 2001 / BCRC 20586 / JCM 3761 / NBRC 0622 / NRRL Y-65 / CBS 138) (Yeast).